Consider the following 333-residue polypeptide: Aspartate carbamoyltransferase catalytic subunit (333 aa).

Residues R61 and T62 each coordinate carbamoyl phosphate. K89 is a binding site for L-aspartate. The carbamoyl phosphate site is built by R111, H144, and Q147. L-aspartate contacts are provided by R184 and R248. Carbamoyl phosphate is bound by residues G289 and P290.

This sequence belongs to the aspartate/ornithine carbamoyltransferase superfamily. ATCase family. Heterododecamer (2C3:3R2) of six catalytic PyrB chains organized as two trimers (C3), and six regulatory PyrI chains organized as three dimers (R2).

The enzyme catalyses carbamoyl phosphate + L-aspartate = N-carbamoyl-L-aspartate + phosphate + H(+). Its pathway is pyrimidine metabolism; UMP biosynthesis via de novo pathway; (S)-dihydroorotate from bicarbonate: step 2/3. In terms of biological role, catalyzes the condensation of carbamoyl phosphate and aspartate to form carbamoyl aspartate and inorganic phosphate, the committed step in the de novo pyrimidine nucleotide biosynthesis pathway. The polypeptide is Aspartate carbamoyltransferase catalytic subunit (Trichormus variabilis (strain ATCC 29413 / PCC 7937) (Anabaena variabilis)).